Consider the following 208-residue polypeptide: MTQKNGPLRVGIGGPVGSGKTTLTEKLCKAMRDKYSVAIITNDIYTQEDALILARRQALSEDRIIGVETGGCPHTAIREDASINLQAVVEMTRRFPDLDVVFIESGGDNLAATFSPDLADLTLYVISVCQGEEIPRKGGPGITRSDFLVINKSDLAPYVHVDLEVMEADAMRMRAKRPFGFTDLHRGKGVQEIIDFIVENGGLEPRSN.

14–21 (GPVGSGKT) is a GTP binding site.

It belongs to the SIMIBI class G3E GTPase family. UreG subfamily. In terms of assembly, homodimer. UreD, UreF and UreG form a complex that acts as a GTP-hydrolysis-dependent molecular chaperone, activating the urease apoprotein by helping to assemble the nickel containing metallocenter of UreC. The UreE protein probably delivers the nickel.

The protein resides in the cytoplasm. Its function is as follows. Facilitates the functional incorporation of the urease nickel metallocenter. This process requires GTP hydrolysis, probably effectuated by UreG. This Brucella ovis (strain ATCC 25840 / 63/290 / NCTC 10512) protein is Urease accessory protein UreG 1.